The primary structure comprises 67 residues: uncharacterized protein (67 aa).

2 consecutive transmembrane segments (helical) span residues 10-32 (NLSHVLALFLVSFILMAPYTAFI) and 44-66 (ATLTGIVAGILSNPGLFAYMGQW).

Its subcellular location is the cell membrane. This is an uncharacterized protein from Archaeoglobus fulgidus (strain ATCC 49558 / DSM 4304 / JCM 9628 / NBRC 100126 / VC-16).